A 388-amino-acid chain; its full sequence is tRNA (guanine(26)-N(2))-dimethyltransferase (388 aa).

The Trm1 methyltransferase domain occupies 4 to 383; the sequence is KTIVEGTTKV…APITEIKEII (380 aa). The S-adenosyl-L-methionine site is built by arginine 41, arginine 78, aspartate 94, and alanine 123. Residues cysteine 251, cysteine 254, cysteine 271, and cysteine 274 each coordinate Zn(2+).

The protein belongs to the class I-like SAM-binding methyltransferase superfamily. Trm1 family.

It carries out the reaction guanosine(26) in tRNA + 2 S-adenosyl-L-methionine = N(2)-dimethylguanosine(26) in tRNA + 2 S-adenosyl-L-homocysteine + 2 H(+). Functionally, dimethylates a single guanine residue at position 26 of a number of tRNAs using S-adenosyl-L-methionine as donor of the methyl groups. This Methanosarcina barkeri (strain Fusaro / DSM 804) protein is tRNA (guanine(26)-N(2))-dimethyltransferase.